The chain runs to 274 residues: MTDGLVRLRLDLSYDGTPFAGWARQPGQRTVQGDVEDALMRVARLPAVRLTVAGRTDSGVHAVGQVAHVDLPDDVPLGGLARRLNGVLDRAVRIIGLAPAPPGFDARFSALSRRYVYRITDAPYGAEPLRRFDTLAWPRPLDVPAMAAAALFLVGEHDFAAFCRRREGATTVRTLLRLDVLRRPEGVVVADVEADAFCHSMVRALVGALLAVGEGRKPPQWPAAVLHRGVRDPAVTVAPAHGLTLVDVRYPPDPELAARAEVTRAVRIPPTPSG.

Residue D57 is the Nucleophile of the active site. A substrate-binding site is contributed by Y115.

Belongs to the tRNA pseudouridine synthase TruA family. As to quaternary structure, homodimer.

The enzyme catalyses uridine(38/39/40) in tRNA = pseudouridine(38/39/40) in tRNA. Its function is as follows. Formation of pseudouridine at positions 38, 39 and 40 in the anticodon stem and loop of transfer RNAs. This is tRNA pseudouridine synthase A from Frankia casuarinae (strain DSM 45818 / CECT 9043 / HFP020203 / CcI3).